The primary structure comprises 100 residues: Small ribosomal subunit protein uS14c (100 aa).

This sequence belongs to the universal ribosomal protein uS14 family. Part of the 30S ribosomal subunit.

The protein localises to the plastid. Its subcellular location is the chloroplast. Functionally, binds 16S rRNA, required for the assembly of 30S particles. The protein is Small ribosomal subunit protein uS14c of Chloranthus spicatus (Chulantree).